Consider the following 329-residue polypeptide: Serpentine receptor class alpha-6 (329 aa).

The next 7 membrane-spanning stretches (helical) occupy residues 26-46 (VDLL…KIVI), 68-88 (LYQI…FFML), 104-124 (YFKV…GLLI), 143-163 (IGVC…FIIL), 187-207 (NLFS…SIFI), 238-258 (ICFL…GILI), and 273-293 (FWIA…VLLI).

Belongs to the nematode receptor-like protein sra family.

It localises to the membrane. The sequence is that of Serpentine receptor class alpha-6 (sra-6) from Caenorhabditis elegans.